The following is a 222-amino-acid chain: Glutathione S-transferase A3 (222 aa).

An N-acetylalanine modification is found at Ala2. One can recognise a GST N-terminal domain in the interval 3–83 (GKPKLHYFNG…YIASKYNLYG (81 aa)). Lys4 is modified (N6-succinyllysine). Residues Tyr9, Arg45, 54–55 (QV), and 67–68 (QT) each bind glutathione. The GST C-terminal domain occupies 85-207 (DIKERALIDM…LQPGSPRKPP (123 aa)).

It belongs to the GST superfamily. Alpha family. Homodimer.

Its subcellular location is the cytoplasm. The enzyme catalyses RX + glutathione = an S-substituted glutathione + a halide anion + H(+). It carries out the reaction androst-5-ene-3,17-dione = androst-4-ene-3,17-dione. The catalysed reaction is pregn-5-ene-3,20-dione = progesterone. Functionally, conjugation of reduced glutathione to a wide number of exogenous and endogenous hydrophobic electrophiles. Catalyzes isomerization reactions that contribute to the biosynthesis of steroid hormones. Efficiently catalyze obligatory double-bond isomerizations of delta(5)-androstene-3,17-dione and delta(5)-pregnene-3,20-dione, precursors to testosterone and progesterone, respectively. Has substantial activity toward aflatoxin B1-8,9-epoxide. The sequence is that of Glutathione S-transferase A3 from Homo sapiens (Human).